Here is a 346-residue protein sequence, read N- to C-terminus: MAQAPDREKALELAMAQIEKSYGKGSVMRLGDEVRQPISIIPTGSIALDVALGIGGLPRGRVIEIYGPESSGKTTVALHAVANAQAAGGVAAFIDAEHALDPEYAKKLGVDTDSLLVSQPDTGEQALEIVDMLIRSGALDIVVIDSVAALVPRAELEGEMGDSHVGLQARLMSQALRKMTGALNNSGTTAIFINQLRDKIGVMFGSPETTTGGKALKFYASVRMDVRRIETLKDGTNAVGNRTRVKIVKNKVSPPFKQAEFDILYGRGISREGSLIDMGVDQGFIRKSGAWFTYEGEQLGQGKENARNFLLENGGVANEIEKKIKEKLGIGAVVTDDGVLPAPVDF.

67–74 contacts ATP; sequence GPESSGKT.

The protein belongs to the RecA family.

The protein resides in the cytoplasm. Its function is as follows. Can catalyze the hydrolysis of ATP in the presence of single-stranded DNA, the ATP-dependent uptake of single-stranded DNA by duplex DNA, and the ATP-dependent hybridization of homologous single-stranded DNAs. It interacts with LexA causing its activation and leading to its autocatalytic cleavage. This is Protein RecA from Mycobacterium ulcerans (strain Agy99).